The sequence spans 300 residues: Ribonuclease HIII (300 aa).

The region spanning 86–300 (RPRLGVDESG…FNEICDSASA (215 aa)) is the RNase H type-2 domain. 3 residues coordinate a divalent metal cation: Asp92, Glu93, and Asp196.

Belongs to the RNase HII family. RnhC subfamily. The cofactor is Mn(2+). Mg(2+) serves as cofactor.

It localises to the cytoplasm. It carries out the reaction Endonucleolytic cleavage to 5'-phosphomonoester.. In terms of biological role, endonuclease that specifically degrades the RNA of RNA-DNA hybrids. The sequence is that of Ribonuclease HIII from Chlamydia caviae (strain ATCC VR-813 / DSM 19441 / 03DC25 / GPIC) (Chlamydophila caviae).